Reading from the N-terminus, the 154-residue chain is UPF0756 membrane protein EAT1b_0668 (154 aa).

5 helical membrane passes run 5 to 25 (LFLL…VIIA), 52 to 72 (WGVT…DIGF), 82 to 102 (PVGI…GQGV), 107 to 127 (VDPV…GFMK), and 129 to 149 (IPVG…GYQV).

This sequence belongs to the UPF0756 family.

Its subcellular location is the cell membrane. This Exiguobacterium sp. (strain ATCC BAA-1283 / AT1b) protein is UPF0756 membrane protein EAT1b_0668.